The primary structure comprises 633 residues: 1-deoxy-D-xylulose-5-phosphate synthase 2 (633 aa).

Thiamine diphosphate contacts are provided by residues His-73 and Ser-113–Ala-115. Position 145 (Asp-145) interacts with Mg(2+). Thiamine diphosphate contacts are provided by residues Gly-146 to Ala-147, Asn-175, Tyr-286, and Glu-367. Position 175 (Asn-175) interacts with Mg(2+).

The protein belongs to the transketolase family. DXPS subfamily. As to quaternary structure, homodimer. Mg(2+) serves as cofactor. The cofactor is thiamine diphosphate.

The catalysed reaction is D-glyceraldehyde 3-phosphate + pyruvate + H(+) = 1-deoxy-D-xylulose 5-phosphate + CO2. Its pathway is metabolic intermediate biosynthesis; 1-deoxy-D-xylulose 5-phosphate biosynthesis; 1-deoxy-D-xylulose 5-phosphate from D-glyceraldehyde 3-phosphate and pyruvate: step 1/1. Catalyzes the acyloin condensation reaction between C atoms 2 and 3 of pyruvate and glyceraldehyde 3-phosphate to yield 1-deoxy-D-xylulose-5-phosphate (DXP). The polypeptide is 1-deoxy-D-xylulose-5-phosphate synthase 2 (Kitasatospora griseola (Streptomyces griseolosporeus)).